The primary structure comprises 440 residues: Enolase 1-2 (440 aa).

The substrate site is built by His-160 and Glu-169. Glu-212 (proton donor) is an active-site residue. The Mg(2+) site is built by Asp-247, Glu-296, and Asp-321. Glu-296 and Asp-321 together coordinate substrate. Catalysis depends on Lys-346, which acts as the Proton acceptor. Residues 373 to 376 (SHRS) and Lys-397 contribute to the substrate site.

It belongs to the enolase family. Homodimer. Mg(2+) is required as a cofactor.

It is found in the cytoplasm. The enzyme catalyses (2R)-2-phosphoglycerate = phosphoenolpyruvate + H2O. It functions in the pathway carbohydrate degradation; glycolysis; pyruvate from D-glyceraldehyde 3-phosphate: step 4/5. This chain is Enolase 1-2 (eno102), found in Schizosaccharomyces pombe (strain 972 / ATCC 24843) (Fission yeast).